Reading from the N-terminus, the 258-residue chain is Alpha-fibrinogenase-like (258 aa).

The signal sequence occupies residues methionine 1–alanine 18. Positions glutamine 19–leucine 24 are excised as a propeptide. Residues valine 25–alanine 249 form the Peptidase S1 domain. 6 disulfide bridges follow: cysteine 31-cysteine 163, cysteine 50-cysteine 66, cysteine 98-cysteine 256, cysteine 142-cysteine 210, cysteine 174-cysteine 189, and cysteine 200-cysteine 225. N-linked (GlcNAc...) asparagine glycosylation occurs at asparagine 44. Residues histidine 65 and aspartate 110 each act as charge relay system in the active site. Serine 204 functions as the Charge relay system in the catalytic mechanism.

This sequence belongs to the peptidase S1 family. Snake venom subfamily. In terms of assembly, monomer. In terms of tissue distribution, expressed by the venom gland.

It is found in the secreted. In terms of biological role, degrades alpha chain of fibrinogen (FGA), and has strong caseinolytic activity. Cleaves oxidized insulin B-chain at '40-Tyr-|-Leu-41', '48-Phe-|-Phe-49' and '49-Phe-|-Tyr-50', and glucagon at the bonds '62-Tyr-|-Ser-63', 66-Leu-|-Asp-67' and '78-Leu-|-Met-79' bonds. The protein is Alpha-fibrinogenase-like of Daboia siamensis (Eastern Russel's viper).